The following is a 200-amino-acid chain: Small ribosomal subunit protein uS4 (200 aa).

Residues 22–42 are disordered; it reads TGKELEKRPYAPGPHGPNQRK. One can recognise an S4 RNA-binding domain in the interval 92–152; sequence ARLDNLVYRM…EKSNSLVVVK (61 aa).

The protein belongs to the universal ribosomal protein uS4 family. In terms of assembly, part of the 30S ribosomal subunit. Contacts protein S5. The interaction surface between S4 and S5 is involved in control of translational fidelity.

In terms of biological role, one of the primary rRNA binding proteins, it binds directly to 16S rRNA where it nucleates assembly of the body of the 30S subunit. Its function is as follows. With S5 and S12 plays an important role in translational accuracy. The sequence is that of Small ribosomal subunit protein uS4 from Bacillus mycoides (strain KBAB4) (Bacillus weihenstephanensis).